Reading from the N-terminus, the 287-residue chain is Putative ABC transporter ATP-binding protein MM_1038 (287 aa).

Residues 5–238 (LENISVFYSR…ENVPLPPVAS (234 aa)) form the ABC transporter domain. 40–47 (GEKGAGKS) is an ATP binding site.

This sequence belongs to the ABC transporter superfamily.

Its subcellular location is the cell membrane. Probably part of an ABC transporter complex. Responsible for energy coupling to the transport system. In Methanosarcina mazei (strain ATCC BAA-159 / DSM 3647 / Goe1 / Go1 / JCM 11833 / OCM 88) (Methanosarcina frisia), this protein is Putative ABC transporter ATP-binding protein MM_1038.